We begin with the raw amino-acid sequence, 202 residues long: MPEVEVDNNNEKPSEINSFHHMIISSSKNVLKMEEVEVSKKRKFQTDQSDELSLLPLSKHTCFANVACSENTNGNSEIDTEYSMSSYVNSTTSMECNNDIEMKEESSGSCGEDKMISFESHLDYIYGTQNLEDFSEKVIENILYLDEQEEEEEDAKGCSSNAAKFVLSSGRWTVNQDDSTLHETKKPTIDQEFEQYFSTLML.

Phosphoserine is present on S39. Residues 40-43 (KKRK) carry the Nuclear localization sequence (NLS) motif. A Nuclear export sequence (NES) motif is present at residues 54-57 (LLPL). A Phosphothreonine modification is found at T61.

Belongs to the FHY1 protein family. Homodimer and heterodimer with FHL. Interacts with underphosphorylated PHYA, especially upon far-red (FR) light illumination. Binds to LAF1 and HFR1. Forms PHYA/FHY1/HFR1 complex in darkness but dissociates from PHYA and HFR1 in response to continuous FR light (FRc). In terms of processing, inactivated by rapid reversible PHYA-mediated phosphorylation at Ser-39 and Thr-61 in red light (R), thus inhibiting PHYA signaling in a negative feedback loop; this ensures the seedling deetiolation process in response to a R-enriched light condition. Subsequent exposure to far-red light (FR) after the R conditions leads to dephosphorylation. The phosphorylated form is cytoplasmic only and unable to bind to chromatin at direct target genes whereas the unphosphorylated form can shuttle from cytoplasm to nucleus. As to expression, expressed in hypocotyl cells of etiolated plants.

Its subcellular location is the nucleus. It localises to the cytoplasm. Its function is as follows. Key regulator of far red / red (FR/R) spectrum-specific responses essential for the adaption to changing light conditions (e.g. de-etiolation), essentially by regulating PHYA shuttling from the cytoplasm to the nucleus and by directly regulating the expression of some target genes, depending on light conditions and phosphorylation status. Binds chromatin at target genes promoters, especially in FR light conditions. Can activate transcription of different genes, some being in a phytochrome A (PHYA)-dependent and other in a PHYA-independent manners. Controls specific aspects of plant development, such as the inhibition of seed germination under FR during salt stress. Essential for light-regulated PHYA nuclear accumulation and subsequent PHYA phototropic signaling processes involved in photomorphogenesis. Mediates the association of PHYA with HFR1 and LAF1 in the nucleus in response to FR conditions. PHYA-specific signal transducer in response to continuous FR lights. Contributes to inhibition of hypocotyl elongation in continuous blue light (B). In Arabidopsis thaliana (Mouse-ear cress), this protein is Protein FAR-RED ELONGATED HYPOCOTYL 1.